Reading from the N-terminus, the 950-residue chain is MKLSELFNPNEFAARHLSFGDEAALLAAVDEKSMDEFVGNTVPQSIRMPSELDLPEALTEADALAKLKGIASKNMINKSYIGLGYYPTRVPNVILRNVLENPGWYTAYTPYQAEIAQGRLEALLNFQQVCIDLTGFPVAGASLLDEATAAAEAMAMAHRVGKVKSERFFVDERVYPQTLDVMKTRAKYFGFELVVGDFAQADEGEYFGALFQYVGKDGDVQDLQDVIGRLKAKGTIVAVAADIMSLVLLKSPAELGADIALGNTQRFGVPMGFGGPHAAYFAFKDEFKRSAPGRIIGVSKDASGKPALRMALSTREQHIRREKATSNICTAQALLANLAGMYAVYHGPKGVKRIADRIHALASAFADALVSDGLNVVHKVFFDTVTVDFGNKEKADQVFAAALESGYNLRRVNDTQVAAAFHETSACEDLVDLYRAFTGKDTFAFADDVKGRLNAELLRQDDILQHPVFNSYHTEHEMLRYLKKLEDRDLAMNRSMISLGSCTMKLNATAEMLPITWAEFSDIHPYAPEAQTAGYRELLADMENSLKAITGFDAISLQPNSGAQGEYTGMLSIRRYQEAQGEAHRNICLIPKSAHGTNPATAAMLGLKVVVVDTDEHGNVNIDDLKAKAEQHRDALSAIMITYPSTHGVYEEGIRDICRIIHENGGQVYMDGANLNAQIGIMQPAEVGADVLHMNLHKTFCIPHGGGGPGMGPIGLKAHLAPFAPGHTLTDTHSASAGQTAVAAAAYGSASILPITWMYLTMMGKQGMEQATRWALLNANYVAKRLSEDYPILYTGKNGRVAHECIVDLRPLKAESGITETDIAKRLMDYGFHAPTVSFPVAGTLMIEPTESESKAELDRFIATLKSIRREVQKVIDGEWPKDDNPLVNAPHTAADITGNWAHPYSREEAVFPLPFVREHKFWPFVNRVDDVYGDRNLVCSCPPMENYED.

Lys698 is modified (N6-(pyridoxal phosphate)lysine).

Belongs to the GcvP family. As to quaternary structure, the glycine cleavage system is composed of four proteins: P, T, L and H. Pyridoxal 5'-phosphate serves as cofactor.

The enzyme catalyses N(6)-[(R)-lipoyl]-L-lysyl-[glycine-cleavage complex H protein] + glycine + H(+) = N(6)-[(R)-S(8)-aminomethyldihydrolipoyl]-L-lysyl-[glycine-cleavage complex H protein] + CO2. The glycine cleavage system catalyzes the degradation of glycine. The P protein binds the alpha-amino group of glycine through its pyridoxal phosphate cofactor; CO(2) is released and the remaining methylamine moiety is then transferred to the lipoamide cofactor of the H protein. The sequence is that of Glycine dehydrogenase (decarboxylating) from Neisseria meningitidis serogroup A / serotype 4A (strain DSM 15465 / Z2491).